Reading from the N-terminus, the 420-residue chain is UDP-glucuronic acid decarboxylase 1 (420 aa).

An N-acetylmethionine modification is found at methionine 1. Topologically, residues 1-19 are cytoplasmic; sequence MVSKGLLRLVSSVNRRKMK. Residues 20-40 form a helical; Signal-anchor for type II membrane protein membrane-spanning segment; it reads LLLGIALFAYAASVWGNFVNM. Residues 41–420 are Lumenal-facing; that stretch reads RSIQENGELK…RVKKGRTRHS (380 aa). Threonine 94 is modified (phosphothreonine). NAD(+) contacts are provided by glycine 98, phenylalanine 99, valine 100, aspartate 119, asparagine 120, phenylalanine 122, threonine 123, glycine 124, aspartate 144, and valine 145. Residues leucine 149 and tyrosine 150 each contribute to the UDP-alpha-D-glucuronate site. Residues leucine 159 and serine 161 each contribute to the NAD(+) site. Lysine 177 serves as a coordination point for UDP-alpha-D-glucuronate. Residue threonine 178 participates in NAD(+) binding. UDP-alpha-D-glucuronate is bound by residues asparagine 185, glycine 188, lysine 191, and arginine 192. Positions 200, 231, and 235 each coordinate NAD(+). The Proton acceptor role is filled by tyrosine 231. Tyrosine 245, glutamine 248, and glutamate 249 together coordinate UDP-alpha-D-glucuronate. Threonine 261, histidine 267, and arginine 272 together coordinate NAD(+). Asparagine 316 is a glycosylation site (N-linked (GlcNAc...) asparagine).

The protein belongs to the NAD(P)-dependent epimerase/dehydratase family. UDP-glucuronic acid decarboxylase subfamily. In terms of assembly, homodimer and homotetramer. Interacts with AKT1. NAD(+) serves as cofactor. In terms of tissue distribution, ubiquitous. Detected in heart, brain, spleen, lung, testis, liver, skeletal muscle and kidney.

It is found in the golgi apparatus. It localises to the golgi stack membrane. It carries out the reaction UDP-alpha-D-glucuronate + H(+) = UDP-alpha-D-xylose + CO2. The protein operates within nucleotide-sugar biosynthesis; UDP-alpha-D-xylose biosynthesis; UDP-alpha-D-xylose from UDP-alpha-D-glucuronate: step 1/1. Functionally, catalyzes the NAD-dependent decarboxylation of UDP-glucuronic acid to UDP-xylose. Necessary for the biosynthesis of the core tetrasaccharide in glycosaminoglycan biosynthesis. The chain is UDP-glucuronic acid decarboxylase 1 from Rattus norvegicus (Rat).